The chain runs to 233 residues: 2,3-bisphosphoglycerate-dependent phosphoglycerate mutase (233 aa).

Residues 8–15 (RHGESEWN), 21–22 (TG), R60, 87–90 (ERHY), K98, 114–115 (RR), and 183–184 (GN) each bind substrate. H9 serves as the catalytic Tele-phosphohistidine intermediate. The active-site Proton donor/acceptor is the E87.

Belongs to the phosphoglycerate mutase family. BPG-dependent PGAM subfamily.

The catalysed reaction is (2R)-2-phosphoglycerate = (2R)-3-phosphoglycerate. It functions in the pathway carbohydrate degradation; glycolysis; pyruvate from D-glyceraldehyde 3-phosphate: step 3/5. Catalyzes the interconversion of 2-phosphoglycerate and 3-phosphoglycerate. The polypeptide is 2,3-bisphosphoglycerate-dependent phosphoglycerate mutase (Lactococcus lactis subsp. cremoris (strain MG1363)).